A 1357-amino-acid polypeptide reads, in one-letter code: DNA-directed RNA polymerase subunit beta (1357 aa).

This sequence belongs to the RNA polymerase beta chain family. The RNAP catalytic core consists of 2 alpha, 1 beta, 1 beta' and 1 omega subunit. When a sigma factor is associated with the core the holoenzyme is formed, which can initiate transcription.

The enzyme catalyses RNA(n) + a ribonucleoside 5'-triphosphate = RNA(n+1) + diphosphate. DNA-dependent RNA polymerase catalyzes the transcription of DNA into RNA using the four ribonucleoside triphosphates as substrates. This Pseudomonas aeruginosa (strain ATCC 15692 / DSM 22644 / CIP 104116 / JCM 14847 / LMG 12228 / 1C / PRS 101 / PAO1) protein is DNA-directed RNA polymerase subunit beta.